The sequence spans 503 residues: Glycerol kinase (503 aa).

Threonine 17 serves as a coordination point for ADP. ATP-binding residues include threonine 17, threonine 18, and serine 19. Residue threonine 17 coordinates sn-glycerol 3-phosphate. Arginine 21 is an ADP binding site. Residues arginine 87, glutamate 88, tyrosine 141, and aspartate 245 each contribute to the sn-glycerol 3-phosphate site. Glycerol-binding residues include arginine 87, glutamate 88, tyrosine 141, aspartate 245, and glutamine 246. ADP is bound by residues threonine 267 and glycine 310. Positions 267, 310, 314, and 411 each coordinate ATP. Positions 411 and 415 each coordinate ADP.

Belongs to the FGGY kinase family.

It carries out the reaction glycerol + ATP = sn-glycerol 3-phosphate + ADP + H(+). It participates in polyol metabolism; glycerol degradation via glycerol kinase pathway; sn-glycerol 3-phosphate from glycerol: step 1/1. Inhibited by fructose 1,6-bisphosphate (FBP). In terms of biological role, key enzyme in the regulation of glycerol uptake and metabolism. Catalyzes the phosphorylation of glycerol to yield sn-glycerol 3-phosphate. The sequence is that of Glycerol kinase from Pseudomonas tolaasii.